The chain runs to 451 residues: Photosystem II CP43 reaction center protein (451 aa).

Residues A1–T46 are Cytoplasmic-facing. 3 residues coordinate chlorophyll a: W13, L27, and A30. The helical transmembrane segment at L47 to A71 threads the bilayer. Topologically, residues T72 to A111 are lumenal. Residues V92 and G106 each coordinate chlorophyll a. A helical membrane pass occupies residues I112–N133. Over K134 to A155 the chain is Cytoplasmic. I138 is a binding site for chlorophyll a. The helical transmembrane segment at K156–T178 threads the bilayer. Residues N179 to T232 are Lumenal-facing. 2 residues coordinate chlorophyll a: V211 and G225. The chain crosses the membrane as a helical span at residues T233–S253. At L254–V268 the chain is on the cytoplasmic side. The helical transmembrane segment at W269–A290 threads the bilayer. Residues Q291 to G424 lie on the Lumenal side of the membrane. Residue E345 participates in [CaMn4O5] cluster binding. Chlorophyll a-binding residues include L404, F415, and G418. The chain crosses the membrane as a helical span at residues R425–S449. Topologically, residues L450–D451 are cytoplasmic.

The protein belongs to the PsbB/PsbC family. PsbC subfamily. In terms of assembly, PSII is composed of 1 copy each of membrane proteins PsbA, PsbB, PsbC, PsbD, PsbE, PsbF, PsbH, PsbI, PsbJ, PsbK, PsbL, PsbM, PsbT, PsbX, PsbY, PsbZ, Psb30/Ycf12, peripheral proteins PsbO, CyanoQ (PsbQ), PsbU, PsbV and a large number of cofactors. It forms dimeric complexes. Requires Binds multiple chlorophylls and provides some of the ligands for the Ca-4Mn-5O cluster of the oxygen-evolving complex. It may also provide a ligand for a Cl- that is required for oxygen evolution. PSII binds additional chlorophylls, carotenoids and specific lipids. as cofactor.

The protein localises to the cellular thylakoid membrane. In terms of biological role, one of the components of the core complex of photosystem II (PSII). It binds chlorophyll and helps catalyze the primary light-induced photochemical processes of PSII. PSII is a light-driven water:plastoquinone oxidoreductase, using light energy to abstract electrons from H(2)O, generating O(2) and a proton gradient subsequently used for ATP formation. This chain is Photosystem II CP43 reaction center protein, found in Thermostichus vulcanus (Synechococcus vulcanus).